Consider the following 204-residue polypeptide: Cardiotrophin-2 (204 aa).

An N-terminal signal peptide occupies residues 1–22; sequence MYCLLATPLCLLSLLLPPLSPA. Residue Asn44 is glycosylated (N-linked (GlcNAc...) asparagine).

Belongs to the IL-6 superfamily. In terms of assembly, binds to tripartite CNTF receptor complex consisting of CNTF alpha chain, LIFR and IL6ST (in vitro). Not detected in adult tissues.

Its subcellular location is the secreted. In terms of biological role, increases the platelet count associated with splenomegaly. May have an important role in neuronal precursor development and maturation. The sequence is that of Cardiotrophin-2 (Ctf2) from Mus musculus (Mouse).